A 33-amino-acid chain; its full sequence is MLFTFAWASLAAIFTFSIAMVVWGRNGDGTIDL.

The helical transmembrane segment at 2–22 (LFTFAWASLAAIFTFSIAMVV) threads the bilayer.

It belongs to the PetN family. As to quaternary structure, the 4 large subunits of the cytochrome b6-f complex are cytochrome b6, subunit IV (17 kDa polypeptide, PetD), cytochrome f and the Rieske protein, while the 4 small subunits are PetG, PetL, PetM and PetN. The complex functions as a dimer.

The protein resides in the cellular thylakoid membrane. In terms of biological role, component of the cytochrome b6-f complex, which mediates electron transfer between photosystem II (PSII) and photosystem I (PSI), cyclic electron flow around PSI, and state transitions. The sequence is that of Cytochrome b6-f complex subunit 8 from Prochlorococcus marinus (strain SARG / CCMP1375 / SS120).